A 358-amino-acid chain; its full sequence is Mannonate dehydratase (358 aa).

Belongs to the mannonate dehydratase family. The cofactor is Fe(2+). Mn(2+) serves as cofactor.

It carries out the reaction D-mannonate = 2-dehydro-3-deoxy-D-gluconate + H2O. It participates in carbohydrate metabolism; pentose and glucuronate interconversion. Its function is as follows. Catalyzes the dehydration of D-mannonate. The chain is Mannonate dehydratase from Lactococcus lactis subsp. cremoris (strain MG1363).